A 302-amino-acid chain; its full sequence is MKILFLGTPLYASRHLEALLSAGHMVIGVITQPDKPAGRGLRMVHSPVKDLALKNKIPVFESLKDFPFDRLTPDIGIVVAYGGLIKKKFLDLIPFGYYNIHPSLLPKYRGAAPINRALENGEKMTGVSLFKLTEKLDAGPIVLQVEISVDCFETFDSLENRMIEAGKKILCDFLKNPESFELREQDHSQASYAPKITPADLFVDFRKDSEAVKNKIRAYDSRPGARTFFHGEQVKLFGAVAIEKCHSGEPGTIVHIDDKGAYVTTSDGIIVISQIQFPSKKKMSFLSALNGRMLRVKDRFQS.

S103–P106 contacts (6S)-5,6,7,8-tetrahydrofolate.

It belongs to the Fmt family.

The catalysed reaction is L-methionyl-tRNA(fMet) + (6R)-10-formyltetrahydrofolate = N-formyl-L-methionyl-tRNA(fMet) + (6S)-5,6,7,8-tetrahydrofolate + H(+). Attaches a formyl group to the free amino group of methionyl-tRNA(fMet). The formyl group appears to play a dual role in the initiator identity of N-formylmethionyl-tRNA by promoting its recognition by IF2 and preventing the misappropriation of this tRNA by the elongation apparatus. This chain is Methionyl-tRNA formyltransferase, found in Pseudothermotoga lettingae (strain ATCC BAA-301 / DSM 14385 / NBRC 107922 / TMO) (Thermotoga lettingae).